A 546-amino-acid chain; its full sequence is MLGFVGRVAATSASGALRGLGPSPLPQVKVLLRASPAALQSARDYATQTSPSPKAGAATGRIVAVIGAVVDVQFDEGLPPILNALEVQGRETRLVLEVAQHLGESTVRTIAMDGTEGLVRGQKVLDSGAPIKIPVGPETLGRIMNVIGEPIDERGPIKTKQFAAIHAEAPEFVEMSVEQEILVTGIKVVDLLAPYAKGGKIGLFGGAGVGKTVLIMELINNVAKAHGGYSVFAGVGERTREGNDLYHEMIESGVINLKDATSKVALVYGQMNEPPGARARVALTGLTVAEYFRDQEGQDVLLFIDNIFRFTQAGSEVSALLGRIPSAVGYQPTLATDMGTMQERITTTKKGSITSVQAIYVPADDLTDPAPATTFAHLDATTVLSRAIAELGIYPAVDPLDSTSRIMDPNIVGNEHYDVARGVQKILQDYKSLQDIIAILGMDELSEEDKLTVSRARKIQRFLSQPFQVAEVFTGHMGKLVPLKETIKGFQQILAGEYDHLPEQAFYMVGPIEEAVAKADKLAEEHSATQTSPSPKGAAAXXXRVV.

The transit peptide at 1–45 directs the protein to the mitochondrion; that stretch reads MLGFVGRVAATSASGALRGLGPSPLPQVKVLLRASPAALQSARDY. Lysine 123, lysine 132, and lysine 160 each carry N6-acetyllysine; alternate. N6-succinyllysine; alternate is present on residues lysine 123, lysine 132, and lysine 160. Lysine 197 is subject to N6-acetyllysine. Residues glycine 208, valine 209, glycine 210, lysine 211, threonine 212, and valine 213 each coordinate ADP. Glycine 208 contributes to the ATP binding site. Glycine 208, valine 209, glycine 210, lysine 211, and threonine 212 together coordinate phosphate. ATP is bound by residues glycine 210, lysine 211, threonine 212, and valine 213. Threonine 212 is a binding site for Mg(2+). Glutamate 237 is a Mg(2+) binding site. Arginine 238 lines the ATP pocket. An N6-acetyllysine; alternate mark is found at lysine 258 and lysine 263. An N6-succinyllysine; alternate mark is found at lysine 258 and lysine 263. Phosphothreonine is present on threonine 311. An N6-acetyllysine modification is found at lysine 425. A Phosphoserine modification is found at serine 432. Lysine 479 and lysine 484 each carry N6-acetyllysine. Lysine 521 bears the N6-acetyllysine; alternate mark. The residue at position 521 (lysine 521) is an N6-succinyllysine; alternate. A disordered region spans residues 521–546; the sequence is KLAEEHSATQTSPSPKGAAAXXXRVV.

Belongs to the ATPase alpha/beta chains family. As to quaternary structure, homotrimer. Component of the ATP synthase complex composed at least of ATP5F1A/subunit alpha, ATP5F1B/subunit beta, ATP5MC1/subunit c (homooctomer), MT-ATP6/subunit a, MT-ATP8/subunit 8, ATP5ME/subunit e, ATP5MF/subunit f, ATP5MG/subunit g, ATP5MK/subunit k, ATP5MJ/subunit j, ATP5F1C/subunit gamma, ATP5F1D/subunit delta, ATP5F1E/subunit epsilon, ATP5PF/subunit F6, ATP5PB/subunit b, ATP5PD/subunit d, ATP5PO/subunit OSCP. ATP synthase complex consists of a soluble F(1) head domain (subunits alpha(3) and beta(3)) - the catalytic core - and a membrane F(0) domain - the membrane proton channel (subunits c, a, 8, e, f, g, k and j). These two domains are linked by a central stalk (subunits gamma, delta, and epsilon) rotating inside the F1 region and a stationary peripheral stalk (subunits F6, b, d, and OSCP). Interacts with PPIF. Interacts with BCL2L1 isoform BCL-X(L); the interaction mediates the association of BCL2L1 isoform BCL-X(L) with the mitochondrial membrane F(1)F(0) ATP synthase and enhances neurons metabolic efficiency. Interacts with CLN5 and PPT1. Interacts with S100A1; this interaction increases F1-ATPase activity. Interacts with MTLN. Interacts with TTC5/STRAP; the interaction results in decreased mitochondrial ATP production.

It is found in the mitochondrion inner membrane. The catalysed reaction is ATP + H2O + 4 H(+)(in) = ADP + phosphate + 5 H(+)(out). In terms of biological role, catalytic subunit beta, of the mitochondrial membrane ATP synthase complex (F(1)F(0) ATP synthase or Complex V) that produces ATP from ADP in the presence of a proton gradient across the membrane which is generated by electron transport complexes of the respiratory chain. ATP synthase complex consist of a soluble F(1) head domain - the catalytic core - and a membrane F(1) domain - the membrane proton channel. These two domains are linked by a central stalk rotating inside the F(1) region and a stationary peripheral stalk. During catalysis, ATP synthesis in the catalytic domain of F(1) is coupled via a rotary mechanism of the central stalk subunits to proton translocation. In vivo, can only synthesize ATP although its ATP hydrolase activity can be activated artificially in vitro. With the subunit alpha (ATP5F1A), forms the catalytic core in the F(1) domain. This Canis lupus familiaris (Dog) protein is ATP synthase F(1) complex catalytic subunit beta, mitochondrial.